The chain runs to 189 residues: Recombination protein RecR (189 aa).

The C4-type zinc finger occupies 48-63 (CQTCFHLSAEPLCDIC). Residues 71–165 (QLLCVVADSR…QVSRIAYGLP (95 aa)) form the Toprim domain.

The protein belongs to the RecR family.

May play a role in DNA repair. It seems to be involved in an RecBC-independent recombinational process of DNA repair. It may act with RecF and RecO. In Prochlorococcus marinus (strain MIT 9303), this protein is Recombination protein RecR.